The chain runs to 209 residues: Large ribosomal subunit protein uL3 (209 aa).

The interval 133-152 (THGNSLSHRVPGSIGQNQTP) is disordered. Position 150 is an N5-methylglutamine (Q150).

Belongs to the universal ribosomal protein uL3 family. Part of the 50S ribosomal subunit. Forms a cluster with proteins L14 and L19. Post-translationally, methylated by PrmB.

One of the primary rRNA binding proteins, it binds directly near the 3'-end of the 23S rRNA, where it nucleates assembly of the 50S subunit. The polypeptide is Large ribosomal subunit protein uL3 (Yersinia pseudotuberculosis serotype O:1b (strain IP 31758)).